The sequence spans 96 residues: Glutamyl-tRNA(Gln) amidotransferase subunit C (96 aa).

It belongs to the GatC family. As to quaternary structure, heterotrimer of A, B and C subunits.

It carries out the reaction L-glutamyl-tRNA(Gln) + L-glutamine + ATP + H2O = L-glutaminyl-tRNA(Gln) + L-glutamate + ADP + phosphate + H(+). The enzyme catalyses L-aspartyl-tRNA(Asn) + L-glutamine + ATP + H2O = L-asparaginyl-tRNA(Asn) + L-glutamate + ADP + phosphate + 2 H(+). In terms of biological role, allows the formation of correctly charged Asn-tRNA(Asn) or Gln-tRNA(Gln) through the transamidation of misacylated Asp-tRNA(Asn) or Glu-tRNA(Gln) in organisms which lack either or both of asparaginyl-tRNA or glutaminyl-tRNA synthetases. The reaction takes place in the presence of glutamine and ATP through an activated phospho-Asp-tRNA(Asn) or phospho-Glu-tRNA(Gln). This is Glutamyl-tRNA(Gln) amidotransferase subunit C from Deinococcus radiodurans (strain ATCC 13939 / DSM 20539 / JCM 16871 / CCUG 27074 / LMG 4051 / NBRC 15346 / NCIMB 9279 / VKM B-1422 / R1).